The following is a 351-amino-acid chain: Dihydroorotate dehydrogenase (quinone) (351 aa).

FMN is bound by residues 67–71 and T91; that span reads AGFDK. Substrate is bound at residue K71. Residue 116 to 120 participates in substrate binding; sequence NAMGF. The FMN site is built by N145 and N178. A substrate-binding site is contributed by N178. S181 serves as the catalytic Nucleophile. Substrate is bound at residue N183. 2 residues coordinate FMN: K214 and T242. 243 to 244 is a binding site for substrate; that stretch reads NT. FMN is bound by residues G262, G291, and 312-313; that span reads YS.

It belongs to the dihydroorotate dehydrogenase family. Type 2 subfamily. In terms of assembly, monomer. The cofactor is FMN.

It is found in the cell membrane. It carries out the reaction (S)-dihydroorotate + a quinone = orotate + a quinol. It functions in the pathway pyrimidine metabolism; UMP biosynthesis via de novo pathway; orotate from (S)-dihydroorotate (quinone route): step 1/1. Its function is as follows. Catalyzes the conversion of dihydroorotate to orotate with quinone as electron acceptor. The chain is Dihydroorotate dehydrogenase (quinone) from Helicobacter pylori (strain Shi470).